A 187-amino-acid chain; its full sequence is Elongation factor P (187 aa).

It belongs to the elongation factor P family.

The protein resides in the cytoplasm. It participates in protein biosynthesis; polypeptide chain elongation. Involved in peptide bond synthesis. Stimulates efficient translation and peptide-bond synthesis on native or reconstituted 70S ribosomes in vitro. Probably functions indirectly by altering the affinity of the ribosome for aminoacyl-tRNA, thus increasing their reactivity as acceptors for peptidyl transferase. In Mycobacterium leprae (strain Br4923), this protein is Elongation factor P.